The sequence spans 559 residues: Glucosylglycerate phosphorylase (559 aa).

Asp229 acts as the Nucleophile in catalysis.

This sequence belongs to the glycosyl hydrolase 13 family. Glucosylglycerate phosphorylase subfamily.

The catalysed reaction is (2R)-2-O-(alpha-D-glucopyranosyl)-glycerate + phosphate = (R)-glycerate + alpha-D-glucose 1-phosphate. Catalyzes the reversible phosphorolysis of glucosylglycerate into alpha-D-glucose 1-phosphate (Glc1P) and D-glycerate (also called (R)-glycerate). May be a regulator of intracellular levels of glucosylglycerate, a compatible solute that primarily protects organisms facing salt stress and very specific nutritional constraints. Cannot catalyze the phosphorolysis of sucrose. Does not act on other sugars such as alpha-D-galactose 1-phosphate, alpha-D-mannose 1-phosphate or beta-D-glucose 1-phosphate; in vitro D-erythronate can substitute for D-glycerate with a much lower efficiency. The chain is Glucosylglycerate phosphorylase (ycjM) from Escherichia coli (strain K12).